Reading from the N-terminus, the 124-residue chain is Small ribosomal subunit protein uS12 (124 aa).

Position 89 is a 3-methylthioaspartic acid (Asp-89). The segment at 104-124 (TAGVKDRRQSRSKYGAKTPKE) is disordered.

This sequence belongs to the universal ribosomal protein uS12 family. Part of the 30S ribosomal subunit. Contacts proteins S8 and S17. May interact with IF1 in the 30S initiation complex.

Its function is as follows. With S4 and S5 plays an important role in translational accuracy. Interacts with and stabilizes bases of the 16S rRNA that are involved in tRNA selection in the A site and with the mRNA backbone. Located at the interface of the 30S and 50S subunits, it traverses the body of the 30S subunit contacting proteins on the other side and probably holding the rRNA structure together. The combined cluster of proteins S8, S12 and S17 appears to hold together the shoulder and platform of the 30S subunit. The chain is Small ribosomal subunit protein uS12 from Parasynechococcus marenigrum (strain WH8102).